Here is a 490-residue protein sequence, read N- to C-terminus: Betaine aldehyde dehydrogenase (490 aa).

3 residues coordinate K(+): Thr26, Ile27, and Asp93. 150–152 (GAW) is a binding site for NAD(+). Lys162 acts as the Charge relay system in catalysis. 176–179 (KPSE) serves as a coordination point for NAD(+). A K(+)-binding site is contributed by Val180. Residue 230 to 233 (GVAS) coordinates NAD(+). Leu246 contributes to the K(+) binding site. Glu252 acts as the Proton acceptor in catalysis. NAD(+) is bound by residues Gly254, Cys286, and Glu387. Residue Cys286 is the Nucleophile of the active site. A Cysteine sulfenic acid (-SOH) modification is found at Cys286. Lys457 and Gly460 together coordinate K(+). The Charge relay system role is filled by Glu464.

The protein belongs to the aldehyde dehydrogenase family. Dimer of dimers. It depends on K(+) as a cofactor.

It carries out the reaction betaine aldehyde + NAD(+) + H2O = glycine betaine + NADH + 2 H(+). Its pathway is amine and polyamine biosynthesis; betaine biosynthesis via choline pathway; betaine from betaine aldehyde: step 1/1. Involved in the biosynthesis of the osmoprotectant glycine betaine. Catalyzes the irreversible oxidation of betaine aldehyde to the corresponding acid. In Escherichia coli O6:H1 (strain CFT073 / ATCC 700928 / UPEC), this protein is Betaine aldehyde dehydrogenase.